The sequence spans 1603 residues: Gag-Pol polyprotein (1603 aa).

Over residues 124 to 141 the composition is skewed to basic and acidic residues; that stretch reads KGEEVGETTAQRDAKMAP. The segment at 124–144 is disordered; the sequence is KGEEVGETTAQRDAKMAPEKM. A PPXY motif motif is present at residues 172–175; it reads PPPY. Residues 180 to 184 carry the LYPX(n)L motif motif; the sequence is LYPSL. The Nuclear export signal motif lies at 219-229; it reads LTDWARIREEL. CCHC-type zinc fingers lie at residues 507–524 and 533–550; these read GLCY…QCPK and ERCQ…QCRR. The interval 544–571 is disordered; it reads NAKQCRRRDGNQGQRPGKGLSSGSWPVS. The 82-residue stretch at 609–690 folds into the Peptidase A2 domain; the sequence is ITALLDSGAD…VRGSILGRDC (82 aa). The active-site For protease activity; shared with dimeric partner is D614. The 189-residue stretch at 750–938 folds into the Reverse transcriptase domain; sequence LQLGHIEPSL…PGVQYLGYKL (189 aa). 7 residues coordinate Mg(2+): D815, D890, D891, D1158, E1192, D1213, and D1272. Positions 1149 to 1280 constitute an RNase H type-1 domain; the sequence is PVPGPTAFTD…ADSQATFQAY (132 aa). Residues 1280–1321 form an Integrase-type zinc finger; sequence YPLREAKDLHTALHIGPRALSKACNISMQQAREVVQTCPHCN. Zn(2+) contacts are provided by H1289, H1293, C1317, and C1320. The region spanning 1333-1496 is the Integrase catalytic domain; that stretch reads RGLGPLQIWQ…TPIQKHWRPT (164 aa). The Mg(2+) site is built by D1344, D1401, and E1437. Residues 1502–1550 constitute a DNA-binding region (integrase-type); sequence PPVKIRIETGEWEKGWNVLVWGRGYAAVKNRDTDKVIWVPSRKVKPDVT. The tract at residues 1548–1567 is involved in homooctamerization; sequence DVTQKDEVTKKDEASPLFAG. The disordered stretch occupies residues 1566–1603; it reads AGISDWIPWEDEQEGLQGETASNKQERPGEDTLAANES.

Active as a homodimer. As to quaternary structure, homodimer. Homomultimer. Homohexamer. In terms of assembly, homodimer; further associates as a homooctamer. Heterodimer of alpha and beta subunits. Three forms of RT exist: alpha-alpha (alpha-Pol), beta-beta (beta-Pol), and alpha-beta, with the major form being the heterodimer. Both the polymerase and RNase H active sites are located in the alpha subunit of heterodimeric RT alpha-beta. Mg(2+) is required as a cofactor. Mn(2+) serves as cofactor. Specific enzymatic cleavages in vivo yield mature proteins. Post-translationally, capsid protein p27: The cleavage at the C-terminus is slowly trimmed by the viral protease, sometimes being cut internally thereby generating the short version of the capsid protein and a capsid protein C-terminally extended by 3 amino acids in a ratio of 2:1.

It is found in the virion. It catalyses the reaction DNA(n) + a 2'-deoxyribonucleoside 5'-triphosphate = DNA(n+1) + diphosphate. The catalysed reaction is Endonucleolytic cleavage to 5'-phosphomonoester.. Capsid protein p27: Self-associates to form the irregular polyhedron core composed of hexamers and pentamers, that encapsulates the genomic RNA-nucleocapsid complex. Assembles as a tube in vitro. Binds to inositol hexakisphosphate (IP6), which allows the assembly of the polyhedral capsid. In terms of biological role, spacer peptide: Plays a role in the oligomerization of the Gag polyprotein and in the stabilization of the immature particle. Essential layering element during tube assembly. Functionally, binds strongly to viral nucleic acids and promotes their packaging. Plays a role in the maturation-stabilization of the viral dimeric RNA via highly structured zinc-binding motifs. Its function is as follows. The aspartyl protease that mediates proteolytic cleavages of Gag and Gag-Pol polyproteins during or shortly after the release of the virion from the plasma membrane. Cleavages take place as an ordered, step-wise cascade to yield mature proteins. This process is called maturation. Displays maximal activity during the budding process just prior to particle release from the cell. Catalyzes viral DNA integration into the host chromosome, by performing a series of DNA cutting and joining reactions. This recombination event is an essential step in the viral replication cycle. Has a strong preference for using the 3'-OH at the viral DNA end as a nucleophile. In Avian leukosis virus subgroup A (isolate RSA) (ALV-A RSA), this protein is Gag-Pol polyprotein (gag-pol).